A 469-amino-acid chain; its full sequence is Ribulose bisphosphate carboxylase large chain (469 aa).

Residue K5 is modified to N6,N6,N6-trimethyllysine. N114 and T164 together coordinate substrate. K166 acts as the Proton acceptor in catalysis. Residue K168 coordinates substrate. Residues K192, D194, and E195 each contribute to the Mg(2+) site. K192 is subject to N6-carboxylysine. Catalysis depends on H285, which acts as the Proton acceptor. 3 residues coordinate substrate: R286, H318, and S370.

The protein belongs to the RuBisCO large chain family. Type I subfamily. In terms of assembly, heterohexadecamer of 8 large chains and 8 small chains; disulfide-linked. The disulfide link is formed within the large subunit homodimers. It depends on Mg(2+) as a cofactor. The disulfide bond which can form in the large chain dimeric partners within the hexadecamer appears to be associated with oxidative stress and protein turnover.

It localises to the plastid. It is found in the chloroplast. The enzyme catalyses 2 (2R)-3-phosphoglycerate + 2 H(+) = D-ribulose 1,5-bisphosphate + CO2 + H2O. It carries out the reaction D-ribulose 1,5-bisphosphate + O2 = 2-phosphoglycolate + (2R)-3-phosphoglycerate + 2 H(+). Functionally, ruBisCO catalyzes two reactions: the carboxylation of D-ribulose 1,5-bisphosphate, the primary event in carbon dioxide fixation, as well as the oxidative fragmentation of the pentose substrate in the photorespiration process. Both reactions occur simultaneously and in competition at the same active site. The protein is Ribulose bisphosphate carboxylase large chain of Calycophyllum candidissimum (Degame lemonwood tree).